A 126-amino-acid chain; its full sequence is Aspartate 1-decarboxylase (126 aa).

The active-site Schiff-base intermediate with substrate; via pyruvic acid is Ser-25. Ser-25 carries the pyruvic acid (Ser) modification. Thr-57 serves as a coordination point for substrate. The active-site Proton donor is Tyr-58. 73–75 provides a ligand contact to substrate; that stretch reads GSA.

Belongs to the PanD family. As to quaternary structure, heterooctamer of four alpha and four beta subunits. Pyruvate serves as cofactor. In terms of processing, is synthesized initially as an inactive proenzyme, which is activated by self-cleavage at a specific serine bond to produce a beta-subunit with a hydroxyl group at its C-terminus and an alpha-subunit with a pyruvoyl group at its N-terminus.

The protein localises to the cytoplasm. It carries out the reaction L-aspartate + H(+) = beta-alanine + CO2. The protein operates within cofactor biosynthesis; (R)-pantothenate biosynthesis; beta-alanine from L-aspartate: step 1/1. Catalyzes the pyruvoyl-dependent decarboxylation of aspartate to produce beta-alanine. The sequence is that of Aspartate 1-decarboxylase from Chromobacterium violaceum (strain ATCC 12472 / DSM 30191 / JCM 1249 / CCUG 213 / NBRC 12614 / NCIMB 9131 / NCTC 9757 / MK).